The primary structure comprises 104 residues: Large ribosomal subunit protein uL24 (104 aa).

The protein belongs to the universal ribosomal protein uL24 family. Part of the 50S ribosomal subunit.

In terms of biological role, one of two assembly initiator proteins, it binds directly to the 5'-end of the 23S rRNA, where it nucleates assembly of the 50S subunit. Functionally, one of the proteins that surrounds the polypeptide exit tunnel on the outside of the subunit. The protein is Large ribosomal subunit protein uL24 of Bartonella bacilliformis (strain ATCC 35685 / KC583 / Herrer 020/F12,63).